The following is a 275-amino-acid chain: Large ribosomal subunit protein uL2 (275 aa).

Disordered regions lie at residues alanine 28–isoleucine 49 and alanine 224–proline 246.

It belongs to the universal ribosomal protein uL2 family. In terms of assembly, part of the 50S ribosomal subunit. Forms a bridge to the 30S subunit in the 70S ribosome.

Functionally, one of the primary rRNA binding proteins. Required for association of the 30S and 50S subunits to form the 70S ribosome, for tRNA binding and peptide bond formation. It has been suggested to have peptidyltransferase activity; this is somewhat controversial. Makes several contacts with the 16S rRNA in the 70S ribosome. In Stenotrophomonas maltophilia (strain R551-3), this protein is Large ribosomal subunit protein uL2.